A 348-amino-acid chain; its full sequence is Probable dual-specificity RNA methyltransferase RlmN (348 aa).

The active-site Proton acceptor is Glu-95. In terms of domain architecture, Radical SAM core spans 101–335 (SGNRLTICVS…VSLRASRGLD (235 aa)). An intrachain disulfide couples Cys-108 to Cys-340. Cys-115, Cys-119, and Cys-122 together coordinate [4Fe-4S] cluster. S-adenosyl-L-methionine contacts are provided by residues 162 to 163 (GE), Ser-192, 221 to 223 (SLH), and Asn-297. Cys-340 (S-methylcysteine intermediate) is an active-site residue.

It belongs to the radical SAM superfamily. RlmN family. The cofactor is [4Fe-4S] cluster.

It localises to the cytoplasm. It carries out the reaction adenosine(2503) in 23S rRNA + 2 reduced [2Fe-2S]-[ferredoxin] + 2 S-adenosyl-L-methionine = 2-methyladenosine(2503) in 23S rRNA + 5'-deoxyadenosine + L-methionine + 2 oxidized [2Fe-2S]-[ferredoxin] + S-adenosyl-L-homocysteine. The catalysed reaction is adenosine(37) in tRNA + 2 reduced [2Fe-2S]-[ferredoxin] + 2 S-adenosyl-L-methionine = 2-methyladenosine(37) in tRNA + 5'-deoxyadenosine + L-methionine + 2 oxidized [2Fe-2S]-[ferredoxin] + S-adenosyl-L-homocysteine. Functionally, specifically methylates position 2 of adenine 2503 in 23S rRNA and position 2 of adenine 37 in tRNAs. In Prochlorococcus marinus (strain SARG / CCMP1375 / SS120), this protein is Probable dual-specificity RNA methyltransferase RlmN.